The chain runs to 361 residues: DNA replication and repair protein RecF (361 aa).

Gly30–Thr37 serves as a coordination point for ATP.

This sequence belongs to the RecF family.

The protein localises to the cytoplasm. Functionally, the RecF protein is involved in DNA metabolism; it is required for DNA replication and normal SOS inducibility. RecF binds preferentially to single-stranded, linear DNA. It also seems to bind ATP. The sequence is that of DNA replication and repair protein RecF from Pectobacterium atrosepticum (strain SCRI 1043 / ATCC BAA-672) (Erwinia carotovora subsp. atroseptica).